Consider the following 1185-residue polypeptide: Chromosome partition protein Smc (1185 aa).

34-41 is a binding site for ATP; the sequence is PNGSGKSN. 2 coiled-coil regions span residues 174–376 and 412–526; these read WRRS…EKDI and ENIV…KLDV. The SMC hinge domain occupies 534–644; that stretch reads VGEIISLQKK…CENIDNAFEI (111 aa). Positions 679–1039 form a coiled coil; that stretch reads NIIGRKREIE…IDAMTEKMKG (361 aa).

It belongs to the SMC family. Homodimer.

Its subcellular location is the cytoplasm. Its function is as follows. Required for chromosome condensation and partitioning. This Clostridium kluyveri (strain NBRC 12016) protein is Chromosome partition protein Smc.